Consider the following 150-residue polypeptide: Probable cyclic pyranopterin monophosphate synthase (150 aa).

Substrate contacts are provided by residues Tyr68–His70 and Met104–Glu105. Asp119 is a catalytic residue.

It belongs to the MoaC family. In terms of assembly, homohexamer; trimer of dimers.

The catalysed reaction is (8S)-3',8-cyclo-7,8-dihydroguanosine 5'-triphosphate = cyclic pyranopterin phosphate + diphosphate. It functions in the pathway cofactor biosynthesis; molybdopterin biosynthesis. Its function is as follows. Catalyzes the conversion of (8S)-3',8-cyclo-7,8-dihydroguanosine 5'-triphosphate to cyclic pyranopterin monophosphate (cPMP). The chain is Probable cyclic pyranopterin monophosphate synthase from Thermoplasma volcanium (strain ATCC 51530 / DSM 4299 / JCM 9571 / NBRC 15438 / GSS1).